We begin with the raw amino-acid sequence, 340 residues long: Phosphoribosylformylglycinamidine cyclo-ligase (340 aa).

It belongs to the AIR synthase family.

It localises to the cytoplasm. It catalyses the reaction 2-formamido-N(1)-(5-O-phospho-beta-D-ribosyl)acetamidine + ATP = 5-amino-1-(5-phospho-beta-D-ribosyl)imidazole + ADP + phosphate + H(+). The protein operates within purine metabolism; IMP biosynthesis via de novo pathway; 5-amino-1-(5-phospho-D-ribosyl)imidazole from N(2)-formyl-N(1)-(5-phospho-D-ribosyl)glycinamide: step 2/2. This Streptococcus pyogenes serotype M18 (strain MGAS8232) protein is Phosphoribosylformylglycinamidine cyclo-ligase.